The sequence spans 187 residues: Interferon alpha-1/2 (187 aa).

The first 23 residues, 1–23 (MALPCSFSVALVLLSCHSLCCLA), serve as a signal peptide directing secretion. 2 disulfide bridges follow: C24–C122 and C52–C160. Residue N101 is glycosylated (N-linked (GlcNAc...) asparagine).

The protein belongs to the alpha/beta interferon family.

Its subcellular location is the secreted. In terms of biological role, produced by macrophages, IFN-alpha have antiviral activities. Interferon stimulates the production of two enzymes: a protein kinase and an oligoadenylate synthetase. The protein is Interferon alpha-1/2 of Canis lupus familiaris (Dog).